Reading from the N-terminus, the 172-residue chain is VQ motif-containing protein 17 (172 aa).

The short motif at 51-60 is the VQ element; it reads FREIVQNLTG. The tract at residues 60 to 97 is disordered; that stretch reads GKQDHHHHDLPHQKGLKRNPRSRRSHDHHEVHDMNKSH. A compositionally biased stretch (basic and acidic residues) spans 61 to 71; sequence KQDHHHHDLPH. Positions 72–85 are enriched in basic residues; that stretch reads QKGLKRNPRSRRSH. A compositionally biased stretch (basic and acidic residues) spans 86–95; the sequence is DHHEVHDMNK.

It is found in the nucleus. May function as positive regulator of plant growth. The sequence is that of VQ motif-containing protein 17 from Arabidopsis thaliana (Mouse-ear cress).